We begin with the raw amino-acid sequence, 325 residues long: Phosphate import ATP-binding protein PstB (325 aa).

The 242-residue stretch at 79-320 (IDNYNLWYSN…PNNEKTKDYI (242 aa)) folds into the ABC transporter domain. 111-118 (GPSGCGKS) is a binding site for ATP.

Belongs to the ABC transporter superfamily. Phosphate importer (TC 3.A.1.7) family. The complex is composed of two ATP-binding proteins (PstB), two transmembrane proteins (PstC and PstA) and a solute-binding protein (PstS).

The protein localises to the cell membrane. It catalyses the reaction phosphate(out) + ATP + H2O = ADP + 2 phosphate(in) + H(+). Functionally, part of the ABC transporter complex PstSACB involved in phosphate import. Responsible for energy coupling to the transport system. The sequence is that of Phosphate import ATP-binding protein PstB from Mycoplasmoides gallisepticum (strain R(low / passage 15 / clone 2)) (Mycoplasma gallisepticum).